A 223-amino-acid polypeptide reads, in one-letter code: Putative HTLV-1-related endogenous sequence (223 aa).

Over residues 1 to 19 the composition is skewed to low complexity; the sequence is MRCAHAPAPRTRYPTRAPS. Residues 1–184 are disordered; that stretch reads MRCAHAPAPR…ARAHGEAGAG (184 aa). A compositionally biased stretch (basic and acidic residues) spans 115-126; the sequence is GDRRREGPDRSP. Residues 133-157 are compositionally biased toward low complexity; sequence PAAAAQPDSSSAQAPGPSTLRPAAT.

The chain is Putative HTLV-1-related endogenous sequence (HRES1) from Homo sapiens (Human).